We begin with the raw amino-acid sequence, 680 residues long: MADAVGEVLEGSWNQDLADALDSAVCDLNSDQDGVIQVRDLSPPQRAKLWMIALNVSGKGDSLSSWDGVLDLPEQTLIHSRSQQLIDELGIPVEEGRDLVSDVESVITFYCKSRNVTFTPDLSWPHILKPLLGLQLSRKDLYNCFYAIMNKYIPRDCIVKGRPFHLFRLLLQYHEPEFCSFLDTKKITPDSYAINWLGSLFSSHCLPEVTQALWDVYLQQADPFLIFFLMLIILVNAKDNILIQEGDNKEEIIKMLEQSPSLLEAEDIEDLFSLAQYYNSKTPLSLRKENHNLFGSSLVALKEEDMDLSQALCLPVSVPEILQANQLQPEGVRFFVVDCRPAEQYNAGHLSTAFHLDSDLMLHNPSELALSVKSLLEAQKQSLESGSVASGEHLCFMGSGREEEDMYMNMVLAHFLQKNKEFVSIAKGGFMALQQHLADINVEGPDNVYVHWIVSTSGSHSSLSSADGELNSTDGKGVKSLVNKMTFALKSKSVNVKEKVISFIENTSTPVERHVSSSDRVGKPYRGVKPVFSIGDEEEYDTDEIDSSSISDDDRKEIVNIQTWINKPDVKHHIPCNEVKETGHMFPSHLLITATHMYCLREIAARKGFAYIQSRQALNSVVKITSKKKHPELITFKFGNNNAAGVEIVAVERYLIPNAGDATKVIKQQIMKVLDALESS.

In terms of domain architecture, Rab-GAP TBC spans 40-221 (DLSPPQRAKL…ALWDVYLQQA (182 aa)). In terms of domain architecture, Rhodanese spans 330–442 (EGVRFFVVDC…LQQHLADINV (113 aa)).

Its subcellular location is the golgi apparatus. The protein resides in the trans-Golgi network. It is found in the cytoplasmic vesicle. Functionally, putative Rab GTPase-activating protein which plays a role in vesicular trafficking. Involved in endosome-to-Golgi trafficking. Acts as a bridging protein by binding simultaneously to golgins, located at the trans-Golgi, and to the WASH complex, located on endosome-derived vesicles. Plays a role in brain development. May act as a general inhibitor of innate immunity signaling. This chain is TBC1 domain family member 23 (tbc1d23), found in Danio rerio (Zebrafish).